A 633-amino-acid chain; its full sequence is DNA mismatch repair protein MutL (633 aa).

This sequence belongs to the DNA mismatch repair MutL/HexB family.

Its function is as follows. This protein is involved in the repair of mismatches in DNA. It is required for dam-dependent methyl-directed DNA mismatch repair. May act as a 'molecular matchmaker', a protein that promotes the formation of a stable complex between two or more DNA-binding proteins in an ATP-dependent manner without itself being part of a final effector complex. The protein is DNA mismatch repair protein MutL of Bacillus pumilus (strain SAFR-032).